The following is a 261-amino-acid chain: uncharacterized protein (261 aa).

NADP(+) contacts are provided by Ile33, Lys60, Asp78, and Asn105. Ser157 acts as the Proton donor in catalysis. NADP(+)-binding residues include Tyr172, Lys176, and Thr206. Catalysis depends on Tyr172, which acts as the Proton acceptor. Lys176 functions as the Lowers pKa of active site Tyr in the catalytic mechanism.

It belongs to the short-chain dehydrogenases/reductases (SDR) family.

Its subcellular location is the cytoplasm. It localises to the nucleus. This is an uncharacterized protein from Schizosaccharomyces pombe (strain 972 / ATCC 24843) (Fission yeast).